An 87-amino-acid chain; its full sequence is Small ribosomal subunit protein bS20 (87 aa).

The protein belongs to the bacterial ribosomal protein bS20 family.

In terms of biological role, binds directly to 16S ribosomal RNA. The sequence is that of Small ribosomal subunit protein bS20 from Parvibaculum lavamentivorans (strain DS-1 / DSM 13023 / NCIMB 13966).